The following is a 636-amino-acid chain: Nucleolar protein 9 (636 aa).

Residues 1–59 are disordered; that stretch reads MGQGPRSPHKVGRRFPAGGKRGRGAKGSGRPLPGRKRQPWPPPDGRSEPAPDSHPHLSP. The residue at position 7 (S7) is a Phosphoserine. Residues 45–57 show a composition bias toward basic and acidic residues; the sequence is GRSEPAPDSHPHL. Pumilio repeat units follow at residues 92-123 and 189-223; these read EVETQALALSTNRTGSEMLQELLGFSPLKPLC and EVCDDFLVYCGDTHGSFVVRTLLQVLGGTILESER. The tract at residues 222–241 is disordered; sequence ERARPRGSQSSEAQKTPAQE. Positions 228 to 238 are enriched in polar residues; that stretch reads GSQSSEAQKTP. 4 Pumilio repeats span residues 313–348, 351–386, 509–544, and 547–581; these read SVDGSPLLLFLRDQTSSRLLEQVLLVLEPPRLQSLF, HLQGQLQTLAAHPIANFPLQRLLDAVTTPELLSPVF, LTGPQLLSLAQSPAGSHVLDAILTSPSVTRKLRRRV, and NLKGQYVALACSRHGSRVLDAIWSGAALRARKEIA.

Belongs to the NOP9 family.

This chain is Nucleolar protein 9 (NOP9), found in Homo sapiens (Human).